The chain runs to 587 residues: Formate--tetrahydrofolate ligase (587 aa).

ATP is bound at residue 73-80; that stretch reads TPLGEGKS.

The protein belongs to the formate--tetrahydrofolate ligase family.

The enzyme catalyses (6S)-5,6,7,8-tetrahydrofolate + formate + ATP = (6R)-10-formyltetrahydrofolate + ADP + phosphate. Its pathway is one-carbon metabolism; tetrahydrofolate interconversion. This chain is Formate--tetrahydrofolate ligase, found in Syntrophobacter fumaroxidans (strain DSM 10017 / MPOB).